The primary structure comprises 244 residues: Carboxy-S-adenosyl-L-methionine synthase (244 aa).

S-adenosyl-L-methionine contacts are provided by residues tyrosine 41, glycine 66–serine 68, aspartate 91–asparagine 92, asparagine 134, and arginine 201.

The protein belongs to the class I-like SAM-binding methyltransferase superfamily. Cx-SAM synthase family. In terms of assembly, homodimer.

The enzyme catalyses prephenate + S-adenosyl-L-methionine = carboxy-S-adenosyl-L-methionine + 3-phenylpyruvate + H2O. Catalyzes the conversion of S-adenosyl-L-methionine (SAM) to carboxy-S-adenosyl-L-methionine (Cx-SAM). This chain is Carboxy-S-adenosyl-L-methionine synthase, found in Colwellia psychrerythraea (strain 34H / ATCC BAA-681) (Vibrio psychroerythus).